We begin with the raw amino-acid sequence, 599 residues long: Serine/threonine-protein kinase Nek1 (599 aa).

The Protein kinase domain occupies 4–258 (YEVLEQIGKG…AAELLKHPHL (255 aa)). Residues 10-18 (IGKGAFGSA) and Lys-33 contribute to the ATP site. Asp-129 functions as the Proton acceptor in the catalytic mechanism. 3 disordered regions span residues 364 to 386 (SIVK…EPPK), 461 to 482 (SEDP…PQHC), and 504 to 542 (DDDD…DTSS). A compositionally biased stretch (low complexity) spans 511-530 (DSSSGRNNAAAAASSRAGSS).

Belongs to the protein kinase superfamily. NEK Ser/Thr protein kinase family. NIMA subfamily. Expressed in anthers, pistils and leaves.

The catalysed reaction is L-seryl-[protein] + ATP = O-phospho-L-seryl-[protein] + ADP + H(+). It carries out the reaction L-threonyl-[protein] + ATP = O-phospho-L-threonyl-[protein] + ADP + H(+). In terms of biological role, may be involved in plant development processes. The protein is Serine/threonine-protein kinase Nek1 of Oryza sativa subsp. japonica (Rice).